The chain runs to 54 residues: Relaxin (54 aa).

Q1 is modified (pyrrolidone carboxylic acid). Cystine bridges form between C13/C41, C25/C54, and C40/C45.

The protein belongs to the insulin family. As to quaternary structure, heterodimer of a B chain and an A chain linked by two disulfide bonds.

It is found in the secreted. The function of relaxin in an oviparous species is not yet known. In Squalus acanthias (Spiny dogfish), this protein is Relaxin.